The sequence spans 511 residues: MSIPTDIANLLIGEDAKLSIHFDKIPLHNDAHHSGSKFYMLSTNRALRDHEEKEDDLKYLSKGRQGAIRLNQLLNAPHLIKERESTAQNEGKAVMRLGETAMVIDETFDAQPIHSHIWNSFMSIEFRFPQADFTSLQYLQTSWKGLESGDTLYTKEGTPTFEEVSIVSGVCLFNARLLEMSTTCPKSGGVDVDLLKSSTPTYNELDYIARASSAIADVAAMNILRACEQDSGQRLTIKLDIPSWHYFHTVATKFVSKQCSNTEVLQWMDAVDQRHDQIGQTFVEAIRYGLEQRGIHDSTSYGIGMTSRTNTAAILIRTAIEHEEVPSLDAILAALDSEEDGCWKRFYEMIPVKERPSNLDQLGYLYYVYEAIRPSLAERPAPVPLESDQTKKANLSKKALKKRKPRRLIISVDDSAERRIYSRAQRVLSKIRQCSEKPETYLVESYVCRRFLVNGNEDRARLGRLDPLPDIPVRTGFHHEPMLPLDVVRQLYGNKSALNLQRWLQEAGLSV.

The Conserved DDXXE motif signature appears at 413 to 417; sequence DDSAE.

Belongs to the arginine-containing cyclodipeptide synthase family.

The catalysed reaction is L-arginyl-tRNA(Arg) + L-leucyl-tRNA(Leu) = cyclo(L-arginyl-L-leucyl) + tRNA(Arg) + tRNA(Leu) + 2 H(+). It functions in the pathway secondary metabolite biosynthesis. In terms of biological role, arginine-containing cyclodipeptide synthase; part of the cluster that mediates the biosynthesis of a highly modified cyclo-arginine-leucine dipeptide (cRW). Within the pathway, eshA acts as the scaffold-generating enzyme and is responsible for formation of the cyclo-Arg-Leu diketopiperazine (cRL) from L-arginyl-tRNA(Arg) + L-Leucyl-tRNA(Leu). Additional enzymes from the cluster then further modify the cyclo-Arg-Leu diketopiperazine (cRW) scaffold. In Penicillium shearii (Eupenicillium shearii), this protein is Arginine-containing cyclodipeptide synthase eshA.